The sequence spans 302 residues: 4-hydroxy-tetrahydrodipicolinate synthase (302 aa).

A pyruvate-binding site is contributed by Thr55. Catalysis depends on Tyr144, which acts as the Proton donor/acceptor. Catalysis depends on Lys172, which acts as the Schiff-base intermediate with substrate. Position 214 (Val214) interacts with pyruvate.

The protein belongs to the DapA family. Homotetramer; dimer of dimers.

It is found in the cytoplasm. The catalysed reaction is L-aspartate 4-semialdehyde + pyruvate = (2S,4S)-4-hydroxy-2,3,4,5-tetrahydrodipicolinate + H2O + H(+). The protein operates within amino-acid biosynthesis; L-lysine biosynthesis via DAP pathway; (S)-tetrahydrodipicolinate from L-aspartate: step 3/4. Catalyzes the condensation of (S)-aspartate-beta-semialdehyde [(S)-ASA] and pyruvate to 4-hydroxy-tetrahydrodipicolinate (HTPA). This Synechococcus sp. (strain CC9311) protein is 4-hydroxy-tetrahydrodipicolinate synthase.